The primary structure comprises 200 residues: MFAYFKGSLVTALPEEAVIDVSGVAYRMLISATTFRQLPDEGSQVLLYAHLSVREDALQLYGFFKEEERQLFRLLLLTSGVGPKLALAVLSGLQVPEVHEAIMANEPERLYGVSGVGKKTAARIILELRDKILKLPLVTPAAGKAAMPSHHVKDDAVHALVTLGFSRLLAQKAVSALLEEKPEQSVEEVIKYALATIHNS.

A domain I region spans residues Met1–Phe64. A domain II region spans residues Lys65–Gly143. Residues Gly143–Met147 form a flexible linker region. Residues Pro148–Ser200 are domain III.

The protein belongs to the RuvA family. Homotetramer. Forms an RuvA(8)-RuvB(12)-Holliday junction (HJ) complex. HJ DNA is sandwiched between 2 RuvA tetramers; dsDNA enters through RuvA and exits via RuvB. An RuvB hexamer assembles on each DNA strand where it exits the tetramer. Each RuvB hexamer is contacted by two RuvA subunits (via domain III) on 2 adjacent RuvB subunits; this complex drives branch migration. In the full resolvosome a probable DNA-RuvA(4)-RuvB(12)-RuvC(2) complex forms which resolves the HJ.

Its subcellular location is the cytoplasm. Functionally, the RuvA-RuvB-RuvC complex processes Holliday junction (HJ) DNA during genetic recombination and DNA repair, while the RuvA-RuvB complex plays an important role in the rescue of blocked DNA replication forks via replication fork reversal (RFR). RuvA specifically binds to HJ cruciform DNA, conferring on it an open structure. The RuvB hexamer acts as an ATP-dependent pump, pulling dsDNA into and through the RuvAB complex. HJ branch migration allows RuvC to scan DNA until it finds its consensus sequence, where it cleaves and resolves the cruciform DNA. This chain is Holliday junction branch migration complex subunit RuvA, found in Chlorobium phaeobacteroides (strain DSM 266 / SMG 266 / 2430).